We begin with the raw amino-acid sequence, 135 residues long: S-adenosylmethionine decarboxylase proenzyme (135 aa).

The active-site Schiff-base intermediate with substrate; via pyruvic acid is Ser63. Pyruvic acid (Ser); by autocatalysis is present on Ser63. His68 functions as the Proton acceptor; for processing activity in the catalytic mechanism. The Proton donor; for catalytic activity role is filled by Cys83.

The protein belongs to the prokaryotic AdoMetDC family. Type 1 subfamily. In terms of assembly, heterotetramer of two alpha and two beta chains arranged as a dimer of alpha/beta heterodimers. The cofactor is pyruvate. Post-translationally, is synthesized initially as an inactive proenzyme. Formation of the active enzyme involves a self-maturation process in which the active site pyruvoyl group is generated from an internal serine residue via an autocatalytic post-translational modification. Two non-identical subunits are generated from the proenzyme in this reaction, and the pyruvate is formed at the N-terminus of the alpha chain, which is derived from the carboxyl end of the proenzyme. The post-translation cleavage follows an unusual pathway, termed non-hydrolytic serinolysis, in which the side chain hydroxyl group of the serine supplies its oxygen atom to form the C-terminus of the beta chain, while the remainder of the serine residue undergoes an oxidative deamination to produce ammonia and the pyruvoyl group blocking the N-terminus of the alpha chain.

The catalysed reaction is S-adenosyl-L-methionine + H(+) = S-adenosyl 3-(methylsulfanyl)propylamine + CO2. It participates in amine and polyamine biosynthesis; S-adenosylmethioninamine biosynthesis; S-adenosylmethioninamine from S-adenosyl-L-methionine: step 1/1. Functionally, catalyzes the decarboxylation of S-adenosylmethionine to S-adenosylmethioninamine (dcAdoMet), the propylamine donor required for the synthesis of the polyamines spermine and spermidine from the diamine putrescine. This is S-adenosylmethionine decarboxylase proenzyme from Thermodesulfovibrio yellowstonii (strain ATCC 51303 / DSM 11347 / YP87).